Consider the following 400-residue polypeptide: Queuine tRNA-ribosyltransferase catalytic subunit 1 (400 aa).

The Proton acceptor role is filled by Asp-103. Queuine is bound by residues 103 to 107 (DSGGF), Asp-157, Gln-200, and Gly-227. An RNA binding region spans residues 258–264 (GVGYAVD). Asp-277 serves as the catalytic Nucleophile. The tract at residues 282–286 (TRTAR) is RNA binding; important for wobble base 34 recognition. 4 residues coordinate Zn(2+): Cys-315, Cys-317, Cys-320, and His-345.

This sequence belongs to the queuine tRNA-ribosyltransferase family. In terms of assembly, heterodimer of a catalytic subunit qtrt1 and an accessory subunit qtrt2. Requires Zn(2+) as cofactor.

The protein resides in the cytoplasm. It localises to the mitochondrion outer membrane. The enzyme catalyses guanosine(34) in tRNA + queuine = queuosine(34) in tRNA + guanine. Functionally, catalytic subunit of the queuine tRNA-ribosyltransferase (TGT) that catalyzes the base-exchange of a guanine (G) residue with queuine (Q) at position 34 (anticodon wobble position) in tRNAs with GU(N) anticodons (tRNA-Asp, -Asn, -His and -Tyr), resulting in the hypermodified nucleoside queuosine (7-(((4,5-cis-dihydroxy-2-cyclopenten-1-yl)amino)methyl)-7-deazaguanosine). Catalysis occurs through a double-displacement mechanism. The nucleophile active site attacks the C1' of nucleotide 34 to detach the guanine base from the RNA, forming a covalent enzyme-RNA intermediate. The proton acceptor active site deprotonates the incoming queuine, allowing a nucleophilic attack on the C1' of the ribose to form the product. This Danio rerio (Zebrafish) protein is Queuine tRNA-ribosyltransferase catalytic subunit 1.